Here is a 325-residue protein sequence, read N- to C-terminus: Aquaporin-8 (325 aa).

At 1-10 (MALRSPARDY) the chain is on the cytoplasmic side. The helical transmembrane segment at 11–31 (LVSMIGELVGTFLFLFFAFAA) threads the bilayer. Residues 32–52 (AQTANQPNGTKPLTPNATDTS) are Extracellular-facing. N-linked (GlcNAc...) asparagine glycans are attached at residues Asn-39 and Asn-47. The chain crosses the membrane as a helical span at residues 53–73 (KLLYIALAFGASLAANVWVFF). The Cytoplasmic portion of the chain corresponds to 74–100 (RVSGGQFNPAVTLALVLIRAVSPTKAL). Positions 81–83 (NPA) match the NPA 1 motif. The chain crosses the membrane as a helical span at residues 101-121 (ILIPAQLVGGSLAAAAVKGII). The Extracellular portion of the chain corresponds to 122-140 (PGDDILFAVSLGPGVANVQ). The helical transmembrane segment at 141–161 (GLFIELLLTFMLVFTILMLVA) threads the bilayer. At 162 to 167 (EKTKST) the chain is on the cytoplasmic side. The helical transmembrane segment at 168–188 (FVAPIGIGFSLFIGHLVGIFW) threads the bilayer. Residues 189–212 (TGAGINPARAFSPALIQASFPSYH) are Extracellular-facing. Positions 194 to 196 (NPA) match the NPA 2 motif. A helical membrane pass occupies residues 213-233 (WIYWLGPALGSFLAAGLYLGL). Residues 234–325 (KEMKYELVGG…GSPDSTDLPT (92 aa)) lie on the Cytoplasmic side of the membrane. Disordered regions lie at residues 279-298 (LGQFEGTTEGHRSPVDLERG) and 305-325 (EDDPHIRKSRYGSPDSTDLPT). Basic and acidic residues predominate over residues 286–298 (TEGHRSPVDLERG).

The protein belongs to the MIP/aquaporin (TC 1.A.8) family.

The protein localises to the cell membrane. It catalyses the reaction H2O2(out) = H2O2(in). The catalysed reaction is H2O(in) = H2O(out). Plasma membrane water channel that regulates the reactive oxygen species (ROS)-signaling pathway through its capacity to act as a membrane channel for hydrogen peroxide uptake. Required for the formation of infection structures and infection, especially on host leaves where it is essential for the penetration into the host. Regulates the expression of proteins related to redox-regulation and intracellular signal transduction and plays a role in the distribution of mitochondria in the hyphae. In Botryotinia fuckeliana (strain B05.10) (Noble rot fungus), this protein is Aquaporin-8.